Here is a 295-residue protein sequence, read N- to C-terminus: Probable lipid kinase YegS-like (295 aa).

The DAGKc domain occupies 1-129 (MQGRKAMLVL…IDLGQAGDQL (129 aa)). Residues Thr39, 65-71 (GDGTLRD), and Thr92 each bind ATP. The Mg(2+) site is built by Met210, Asp213, and Leu215. The active-site Proton acceptor is Glu264.

This sequence belongs to the diacylglycerol/lipid kinase family. YegS lipid kinase subfamily. Requires Mg(2+) as cofactor. The cofactor is Ca(2+).

Its subcellular location is the cytoplasm. Probably phosphorylates lipids; the in vivo substrate is unknown. The polypeptide is Probable lipid kinase YegS-like (Pseudomonas putida (strain ATCC 47054 / DSM 6125 / CFBP 8728 / NCIMB 11950 / KT2440)).